The sequence spans 600 residues: Elongation factor 4 (600 aa).

Positions 5 to 187 (SRIRNFSIIA…DLIKKIPPPK (183 aa)) constitute a tr-type G domain. GTP-binding positions include 17–22 (DHGKST) and 134–137 (NKMD).

Belongs to the TRAFAC class translation factor GTPase superfamily. Classic translation factor GTPase family. LepA subfamily.

It is found in the cell inner membrane. It carries out the reaction GTP + H2O = GDP + phosphate + H(+). Required for accurate and efficient protein synthesis under certain stress conditions. May act as a fidelity factor of the translation reaction, by catalyzing a one-codon backward translocation of tRNAs on improperly translocated ribosomes. Back-translocation proceeds from a post-translocation (POST) complex to a pre-translocation (PRE) complex, thus giving elongation factor G a second chance to translocate the tRNAs correctly. Binds to ribosomes in a GTP-dependent manner. The polypeptide is Elongation factor 4 (Marinobacter nauticus (strain ATCC 700491 / DSM 11845 / VT8) (Marinobacter aquaeolei)).